We begin with the raw amino-acid sequence, 66 residues long: uncharacterized protein (66 aa).

The protein belongs to the YeeT/YkfH/YpjJ family.

This is an uncharacterized protein from Escherichia coli (strain K12).